A 395-amino-acid polypeptide reads, in one-letter code: 1-deoxy-D-xylulose 5-phosphate reductoisomerase (395 aa).

Residues Thr-10, Gly-11, Ser-12, Ile-13, Arg-37, Gln-38, and Asn-124 each coordinate NADPH. Position 125 (Lys-125) interacts with 1-deoxy-D-xylulose 5-phosphate. Glu-126 is a binding site for NADPH. Asp-150 is a Mn(2+) binding site. Residues Ser-151, Glu-152, Ser-179, and His-202 each contribute to the 1-deoxy-D-xylulose 5-phosphate site. Residue Glu-152 coordinates Mn(2+). Residue Gly-208 participates in NADPH binding. Residues Ser-215, Asn-220, Lys-221, and Glu-224 each contribute to the 1-deoxy-D-xylulose 5-phosphate site. Glu-224 is a binding site for Mn(2+).

This sequence belongs to the DXR family. Mg(2+) is required as a cofactor. Requires Mn(2+) as cofactor.

The enzyme catalyses 2-C-methyl-D-erythritol 4-phosphate + NADP(+) = 1-deoxy-D-xylulose 5-phosphate + NADPH + H(+). The protein operates within isoprenoid biosynthesis; isopentenyl diphosphate biosynthesis via DXP pathway; isopentenyl diphosphate from 1-deoxy-D-xylulose 5-phosphate: step 1/6. Its function is as follows. Catalyzes the NADPH-dependent rearrangement and reduction of 1-deoxy-D-xylulose-5-phosphate (DXP) to 2-C-methyl-D-erythritol 4-phosphate (MEP). This Cupriavidus pinatubonensis (strain JMP 134 / LMG 1197) (Cupriavidus necator (strain JMP 134)) protein is 1-deoxy-D-xylulose 5-phosphate reductoisomerase.